The primary structure comprises 460 residues: MNKPITPSTYVRCLNVGLIRKLSDFIDPQEGWKKLAVAIKKPSGDDRYNQFHIRRFEALLQTGKSPTSELLFDWGTTNCTVGDLVDLLIQNEFFAPASLLLPDAVPKTANTLPSKEAITVQQKQMPFCDKDRTLMTPVQNLEQSYMPPDSSSPENKSLEVSDTRFHSFSFYELKNVTNNFDERPISVGGNKMGEGGFGVVYKGYVNNTTVAVKKLAAMVDITTEELKQQFDQEIKVMAKCQHENLVELLGFSSDGDDLCLVYVYMPNGSLLDRLSCLDGTPPLSWHMRCKIAQGAANGINFLHENHHIHRDIKSANILLDEAFTAKISDFGLARASEKFAQTVMTSRIVGTTAYMAPEALRGEITPKSDIYSFGVVLLEIITGLPAVDEHREPQLLLDIKEEIEDEEKTIEDYIDKKMNDADSTSVEAMYSVASQCLHEKKNKRPDIKKVQQLLQEMTAS.

N-acetylmethionine is present on methionine 1. One can recognise a Death domain in the interval arginine 20–alanine 104. Lysine 34 carries the N6-acetyllysine modification. The Protein kinase domain maps to serine 186–leucine 454. ATP is bound by residues methionine 192–valine 200 and lysine 213. Aspartate 311 acts as the Proton acceptor in catalysis. ATP contacts are provided by residues lysine 313–asparagine 316 and aspartate 329. 2 positions are modified to phosphothreonine: threonine 342 and threonine 345. Serine 346 is subject to Phosphoserine.

Belongs to the protein kinase superfamily. TKL Ser/Thr protein kinase family. Pelle subfamily. As to quaternary structure, associates with MYD88 and IRAK2 to form a ternary complex called the Myddosome. Once phosphorylated, IRAK4 dissociates from the receptor complex and then associates with the TNF receptor-associated factor 6 (TRAF6), IRAK1, and PELI1; this intermediate complex is required for subsequent NF-kappa-B activation. Direct binding of SMAD6 to PELI1 prevents complex formation and hence negatively regulates IL1R-TLR signaling and eventually NF-kappa-B-mediated gene expression. Interacts with IL1RL1. Interacts (when phosphorylated) with IRAK1. May interact (when phosphorylated) with IRAK3. It depends on Mg(2+) as a cofactor. Post-translationally, phosphorylated.

The protein resides in the cytoplasm. The enzyme catalyses L-seryl-[protein] + ATP = O-phospho-L-seryl-[protein] + ADP + H(+). The catalysed reaction is L-threonyl-[protein] + ATP = O-phospho-L-threonyl-[protein] + ADP + H(+). In terms of biological role, serine/threonine-protein kinase that plays a critical role in initiating innate immune response against foreign pathogens. Involved in Toll-like receptor (TLR) and IL-1R signaling pathways. Is rapidly recruited by MYD88 to the receptor-signaling complex upon TLR activation to form the Myddosome together with IRAK2. Phosphorylates initially IRAK1, thus stimulating the kinase activity and intensive autophosphorylation of IRAK1. Phosphorylates E3 ubiquitin ligases Pellino proteins (PELI1, PELI2 and PELI3) to promote pellino-mediated polyubiquitination of IRAK1. Then, the ubiquitin-binding domain of IKBKG/NEMO binds to polyubiquitinated IRAK1 bringing together the IRAK1-MAP3K7/TAK1-TRAF6 complex and the NEMO-IKKA-IKKB complex. In turn, MAP3K7/TAK1 activates IKKs (CHUK/IKKA and IKBKB/IKKB) leading to NF-kappa-B nuclear translocation and activation. Alternatively, phosphorylates TIRAP to promote its ubiquitination and subsequent degradation. Phosphorylates NCF1 and regulates NADPH oxidase activation after LPS stimulation suggesting a similar mechanism during microbial infections. This is Interleukin-1 receptor-associated kinase 4 (IRAK4) from Homo sapiens (Human).